Here is a 792-residue protein sequence, read N- to C-terminus: Glucocorticoid receptor (792 aa).

The segment covering 1–15 (MDSKESLAPPGRDEV) has biased composition (basic and acidic residues). Positions 1-25 (MDSKESLAPPGRDEVPSSLLGRGRG) are disordered. The tract at residues 1-436 (MDSKESLAPP…STATGPPPKL (436 aa)) is modulating. Residue arginine 24 is modified to Omega-N-methylarginine. Serine 46 is modified (phosphoserine). Residues 67 to 98 (SKGSASNAQQQQQQQQQQQQQQQQQPQPDLSK) are disordered. Positions 75–94 (QQQQQQQQQQQQQQQQQPQP) are enriched in low complexity. Phosphoserine occurs at positions 131, 152, and 159. Over residues 148 to 162 (NRSTSRPENPKSSTP) the composition is skewed to polar residues. The segment at 148 to 201 (NRSTSRPENPKSSTPAAGCATPTEKEFPQTHSDPSSEQQNRKSQPGTNGGSVKL) is disordered. The residue at position 168 (threonine 168) is a Phosphothreonine. Residues 176–193 (QTHSDPSSEQQNRKSQPG) show a composition bias toward polar residues. Residues serine 221, serine 229, serine 243, and serine 284 each carry the phosphoserine modification. Glycyl lysine isopeptide (Lys-Gly) (interchain with G-Cter in SUMO); alternate cross-links involve residues lysine 294 and lysine 310. Glycyl lysine isopeptide (Lys-Gly) (interchain with G-Cter in SUMO2); alternate cross-links involve residues lysine 294 and lysine 310. A phosphoserine mark is found at serine 324 and serine 421. Positions 434–509 (PKLCLVCSDE…AGMNLEARKT (76 aa)) form a DNA-binding region, nuclear receptor. Lysine 435 is covalently cross-linked (Glycyl lysine isopeptide (Lys-Gly) (interchain with G-Cter in ubiquitin)). 2 consecutive NR C4-type zinc fingers follow at residues 437–457 (CLVC…CGSC) and 473–497 (CAGR…YRKC). 4 positions are modified to N6-acetyllysine: lysine 496, lysine 508, lysine 510, and lysine 511. An interaction with CLOCK region spans residues 501 to 792 (GMNLEARKTK…NIKKLLFHQK (292 aa)). The hinge stretch occupies residues 503 to 538 (NLEARKTKKKIKGIQQATAGVSQDTSENANKTIVPA). One can recognise an NR LBD domain in the interval 539–773 (ALPQLTPTLV…FPEMLAEIIT (235 aa)). Residues 547–712 (LVSLLEVIEP…EIRMTYIKEL (166 aa)) form an interaction with CRY1 region. Lysine 718 is covalently cross-linked (Glycyl lysine isopeptide (Lys-Gly) (interchain with G-Cter in SUMO)).

This sequence belongs to the nuclear hormone receptor family. NR3 subfamily. As to quaternary structure, heteromultimeric cytoplasmic complex with HSP90AA1, HSPA1A/HSPA1B, and FKBP5 or another immunophilin such as PPID, STIP1, or the immunophilin homolog PPP5C. Upon ligand binding FKBP5 dissociates from the complex and FKBP4 takes its place, thereby linking the complex to dynein and mediating transport to the nucleus, where the complex dissociates. Probably forms a complex composed of chaperones HSP90 and HSP70, co-chaperones CDC37, PPP5C, TSC1 and client protein TSC2, CDK4, AKT, RAF1 and NR3C1; this complex does not contain co-chaperones STIP1/HOP and PTGES3/p23. Directly interacts with UNC45A. Binds to DNA as a homodimer, and as heterodimer with NR3C2 or the retinoid X receptor. Binds STAT5A and STAT5B homodimers and heterodimers. Interacts with NRIP1, POU2F1, POU2F2 and TRIM28. Interacts with several coactivator complexes, including the SMARCA4 complex, CREBBP/EP300, TADA2L (Ada complex) and p160 coactivators such as NCOA2 and NCOA6. Interaction with BAG1 inhibits transactivation. Interacts with HEXIM1 and TGFB1I1. Interacts with NCOA1. Interacts with NCOA3, SMARCA4, SMARCC1, SMARCD1, and SMARCE1. Interacts with CLOCK, CRY1 and CRY2 in a ligand-dependent fashion. Interacts with CIART. Interacts with RWDD3. Interacts with UBE2I/UBC9 and this interaction is enhanced in the presence of RWDD3. Interacts with GRIP1. Interacts with NR4A3 (via nuclear receptor DNA-binding domain), represses transcription activity of NR4A3 on the POMC promoter Nur response element (NurRE). Directly interacts with PNRC2 to attract and form a complex with UPF1 and DCP1A; the interaction leads to rapid mRNA degradation. Interacts with GSK3B. Interacts with FNIP1 and FNIP2. Interacts (via C-terminus) with HNRNPU (via C-terminus). Interacts with MCM3AP. Interacts (via domain NR LBD) with HSP90AA1 and HSP90AB1. In the absence of hormonal ligand, interacts with TACC1. Interacts (via NR LBD domain) with ZNF764 (via KRAB domain); the interaction regulates transcription factor activity of NR3C1 by directing its actions toward certain biologic pathways. Acetylation by CLOCK reduces its binding to glucocorticoid response elements and its transcriptional activity. In terms of processing, increased proteasome-mediated degradation in response to glucocorticoids. Post-translationally, phosphorylated in the absence of hormone; becomes hyperphosphorylated in the presence of glucocorticoids. Phosphorylated in the absence of hormone; becomes hyperphosphorylated in the presence of glucocorticoid. The Ser-221, Ser-243 and Ser-421-phosphorylated forms are mainly cytoplasmic, and the Ser-229-phosphorylated form is nuclear. Phosphorylation at Ser-229 increases transcriptional activity. Phosphorylation at Ser-221, Ser-243 and Ser-421 decreases signaling capacity. Phosphorylation at Ser-421 may protect from glucocorticoid-induced apoptosis. Phosphorylation at Ser-221 and Ser-229 is not required in regulation of chromosome segregation. May be dephosphorylated by PPP5C, attenuates NR3C1 action. Sumoylation at Lys-294 and Lys-310 negatively regulates its transcriptional activity. Sumoylation at Lys-718 positively regulates its transcriptional activity in the presence of RWDD3. Sumoylation at Lys-294 and Lys-310 is dispensable whereas sumoylation at Lys-718 is critical for the stimulatory effect of RWDD3 on its transcriptional activity. Heat shock increases sumoylation in a RWDD3-dependent manner. In terms of processing, ubiquitinated. Ubiquitination by UBR5 leads to its degradation: UBR5 specifically recognizes and binds ligand-bound NR3C1 when it is not associated with coactivators (NCOAs). In presence of NCOAs, the UBR5-degron is not accessible, preventing its ubiquitination and degradation. In terms of tissue distribution, expressed in spleen, kidney and liver. Expressed in a circadian manner in the liver. As to expression, expressed at highest level in spleen with lesser amounts in kidney and liver.

The protein resides in the cytoplasm. It is found in the nucleus. Its subcellular location is the mitochondrion. The protein localises to the cytoskeleton. It localises to the spindle. The protein resides in the microtubule organizing center. It is found in the centrosome. Its subcellular location is the chromosome. The protein localises to the nucleoplasm. Its function is as follows. Receptor for glucocorticoids (GC). Has a dual mode of action: as a transcription factor that binds to glucocorticoid response elements (GRE), both for nuclear and mitochondrial DNA, and as a modulator of other transcription factors. Affects inflammatory responses, cellular proliferation and differentiation in target tissues. Involved in chromatin remodeling. Plays a role in rapid mRNA degradation by binding to the 5' UTR of target mRNAs and interacting with PNRC2 in a ligand-dependent manner which recruits the RNA helicase UPF1 and the mRNA-decapping enzyme DCP1A, leading to RNA decay. Could act as a coactivator for STAT5-dependent transcription upon growth hormone (GH) stimulation and could reveal an essential role of hepatic GR in the control of body growth. Has transcriptional activation and repression activity. Mediates glucocorticoid-induced apoptosis. Promotes accurate chromosome segregation during mitosis. May act as a tumor suppressor. May play a negative role in adipogenesis through the regulation of lipolytic and antilipogenic gene expression. Functionally, acts as a dominant negative inhibitor of isoform 1. Has intrinsic transcriptional activity independent of isoform Alpha when both isoforms are coexpressed. Loses this transcription modulator function on its own. Has no hormone-binding activity. May play a role in controlling glucose metabolism by maintaining insulin sensitivity. Reduces hepatic gluconeogenesis through down-regulation of PEPCK in an isoform Alpha-dependent manner. Directly regulates STAT1 expression in isoform Alpha-independent manner. The polypeptide is Glucocorticoid receptor (Nr3c1) (Mus musculus (Mouse)).